The chain runs to 130 residues: Small ribosomal subunit protein uS11 (130 aa).

Belongs to the universal ribosomal protein uS11 family. Part of the 30S ribosomal subunit. Interacts with proteins S7 and S18. Binds to IF-3.

Its function is as follows. Located on the platform of the 30S subunit, it bridges several disparate RNA helices of the 16S rRNA. Forms part of the Shine-Dalgarno cleft in the 70S ribosome. This Thermosynechococcus vestitus (strain NIES-2133 / IAM M-273 / BP-1) protein is Small ribosomal subunit protein uS11.